A 100-amino-acid chain; its full sequence is UPF0045 protein MJ1052 (100 aa).

The protein belongs to the UPF0045 family.

The sequence is that of UPF0045 protein MJ1052 from Methanocaldococcus jannaschii (strain ATCC 43067 / DSM 2661 / JAL-1 / JCM 10045 / NBRC 100440) (Methanococcus jannaschii).